Here is a 218-residue protein sequence, read N- to C-terminus: Very-long-chain (3R)-3-hydroxyacyl-CoA dehydratase hpo-8 (218 aa).

5 helical membrane passes run 15–35 (ILGWSAILVKTVLGLANGLTW), 44–64 (FELKIFQTAAILEVIHAIVGL), 86–106 (ILHLCSTARFSIGVPLLLVAW), 137–157 (LFYVLYPMGVSGELLTLFASL), and 176–196 (MGISFWWVLIIAALSYIPGFP). Active-site residues include Y142 and E149.

It belongs to the very long-chain fatty acids dehydratase HACD family.

Its subcellular location is the membrane. It catalyses the reaction a very-long-chain (3R)-3-hydroxyacyl-CoA = a very-long-chain (2E)-enoyl-CoA + H2O. It participates in lipid metabolism; fatty acid biosynthesis. In terms of biological role, catalyzes the third of the four reactions of the long-chain fatty acids elongation cycle. This endoplasmic reticulum-bound enzymatic process, allows the addition of two carbons to the chain of long- and very long-chain fatty acids/VLCFAs per cycle. This enzyme catalyzes the dehydration of the 3-hydroxyacyl-CoA intermediate into trans-2,3-enoyl-CoA, within each cycle of fatty acid elongation. Thereby, it participates in the production of VLCFAs of different chain lengths that are involved in multiple biological processes as precursors of membrane lipids and lipid mediators. The polypeptide is Very-long-chain (3R)-3-hydroxyacyl-CoA dehydratase hpo-8 (hpo-8) (Caenorhabditis elegans).